A 515-amino-acid chain; its full sequence is Folate synthesis bifunctional protein, mitochondrial (515 aa).

A mitochondrion-targeting transit peptide spans 1–28 (MSILKCLGVRGNQLCAARNYLKVLGFSS). The HPPK stretch occupies residues 47-172 (VIALGSNVGD…PFVMAPLMDL (126 aa)). One can recognise a Pterin-binding domain in the interval 230 to 498 (TLVMGILNLT…NVKDNLDAVK (269 aa)). Positions 232–515 (VMGILNLTPD…QKSSPIKFKQ (284 aa)) are DHPS. A Mg(2+)-binding site is contributed by N237. (7,8-dihydropterin-6-yl)methyl diphosphate is bound by residues T277, D314, N333, D406, K451, and 486–488 (RVH).

It in the N-terminal section; belongs to the HPPK family. The protein in the C-terminal section; belongs to the DHPS family. Homomultimer. Requires Mg(2+) as cofactor.

It localises to the mitochondrion. It catalyses the reaction 6-hydroxymethyl-7,8-dihydropterin + ATP = (7,8-dihydropterin-6-yl)methyl diphosphate + AMP + H(+). The enzyme catalyses (7,8-dihydropterin-6-yl)methyl diphosphate + 4-aminobenzoate = 7,8-dihydropteroate + diphosphate. It functions in the pathway cofactor biosynthesis; tetrahydrofolate biosynthesis; 2-amino-4-hydroxy-6-hydroxymethyl-7,8-dihydropteridine diphosphate from 7,8-dihydroneopterin triphosphate: step 4/4. It participates in cofactor biosynthesis; tetrahydrofolate biosynthesis; 7,8-dihydrofolate from 2-amino-4-hydroxy-6-hydroxymethyl-7,8-dihydropteridine diphosphate and 4-aminobenzoate: step 1/2. In terms of biological role, catalyzes the first two consecutive steps of tetrahydrofolate biosynthesis. This chain is Folate synthesis bifunctional protein, mitochondrial, found in Pisum sativum (Garden pea).